Consider the following 423-residue polypeptide: MASALEQFVNSVRQLSAQGQMTQLCELINKSGELLAKNLSHLDTVLGALDVQEHSLGVLAVLFVKFSMPSVPDFETLFSQVQLFISTCNGEHIRYATDTFAGLCHQLTNALVERKQPLRGIGVLRQAIDKMQMNTNQLTSVHADLCQLCLLAKCFKPALPYLDVDMVDICKENGAYDAKHFLCYYYYGGMVYTGLKNFERALYFYEQAITTPAMAVSHIMLESYKKYILVSLILLGKVQQLPKYTSQIVGRFIKPLSNAYHELAQVYSTNNPSELRSLVTKHSEIFTRDNNMGLVKQCLSSLYKKNIQRLTKTFLTLSLQDMASRVQLSGPQEAEKYVLHMIEDGEIFASINQKDGMVSFHDNPEKYNNPAMLHNIDQEMLKCIELDERLKAMDQEITVNPQFVQKSMGSQEDDSGNKPSSYS.

Ala-2 carries the N-acetylalanine modification. Positions 197 to 365 (NFERALYFYE…GMVSFHDNPE (169 aa)) constitute a PCI domain. The interval 402-423 (QFVQKSMGSQEDDSGNKPSSYS) is disordered. Ser-407, Ser-410, and Ser-423 each carry phosphoserine.

The protein belongs to the CSN3 family. In terms of assembly, component of the CSN complex, composed of COPS1/GPS1, COPS2, COPS3, COPS4, COPS5, COPS6, COPS7 (COPS7A or COPS7B), COPS8 and COPS9. In the complex, it probably interacts directly with COPS1, COPS4, COPS8 and COPS9. Interacts with CK2 and PKD. Interacts with the translation initiation factor EIF3S6 and IKBKG. Interacts with ERCC6.

The protein localises to the cytoplasm. The protein resides in the nucleus. Its function is as follows. Component of the COP9 signalosome complex (CSN), a complex involved in various cellular and developmental processes. The CSN complex is an essential regulator of the ubiquitin (Ubl) conjugation pathway by mediating the deneddylation of the cullin subunits of SCF-type E3 ligase complexes, leading to decrease the Ubl ligase activity of SCF-type complexes such as SCF, CSA or DDB2. The complex is also involved in phosphorylation of p53/TP53, c-jun/JUN, IkappaBalpha/NFKBIA, ITPK1 and IRF8/ICSBP, possibly via its association with CK2 and PKD kinases. CSN-dependent phosphorylation of TP53 and JUN promotes and protects degradation by the Ubl system, respectively. Essential to maintain the survival of epiblast cells and thus the development of the postimplantation embryo. The sequence is that of COP9 signalosome complex subunit 3 (COPS3) from Bos taurus (Bovine).